The sequence spans 519 residues: Aldehyde dehydrogenase X, mitochondrial (519 aa).

The N-terminal 19 residues, Met-1–Thr-19, are a transit peptide targeting the mitochondrion. Lys-53 carries the N6-acetyllysine modification. An N6-acetyllysine; alternate modification is found at Lys-54. At Lys-54 the chain carries N6-succinyllysine; alternate. Lys-83 is modified (N6-succinyllysine). Gly-264–Gly-269 contacts NAD(+). Glu-287 functions as the Proton acceptor in the catalytic mechanism. Cys-321 serves as the catalytic Nucleophile. 5 positions are modified to N6-acetyllysine; alternate: Lys-366, Lys-385, Lys-401, Lys-416, and Lys-428. N6-succinyllysine; alternate is present on residues Lys-366, Lys-385, Lys-401, Lys-416, and Lys-428. The residue at position 431 (Lys-431) is an N6-acetyllysine.

The protein belongs to the aldehyde dehydrogenase family. Homotetramer.

The protein resides in the mitochondrion matrix. It catalyses the reaction an aldehyde + NAD(+) + H2O = a carboxylate + NADH + 2 H(+). It functions in the pathway alcohol metabolism; ethanol degradation; acetate from ethanol: step 2/2. ALDHs play a major role in the detoxification of alcohol-derived acetaldehyde. They are involved in the metabolism of corticosteroids, biogenic amines, neurotransmitters, and lipid peroxidation. In Mus musculus (Mouse), this protein is Aldehyde dehydrogenase X, mitochondrial (Aldh1b1).